We begin with the raw amino-acid sequence, 96 residues long: Co-chaperonin GroES (96 aa).

Belongs to the GroES chaperonin family. As to quaternary structure, heptamer of 7 subunits arranged in a ring. Interacts with the chaperonin GroEL.

The protein resides in the cytoplasm. Its function is as follows. Together with the chaperonin GroEL, plays an essential role in assisting protein folding. The GroEL-GroES system forms a nano-cage that allows encapsulation of the non-native substrate proteins and provides a physical environment optimized to promote and accelerate protein folding. GroES binds to the apical surface of the GroEL ring, thereby capping the opening of the GroEL channel. This is Co-chaperonin GroES from Leptothrix cholodnii (strain ATCC 51168 / LMG 8142 / SP-6) (Leptothrix discophora (strain SP-6)).